A 143-amino-acid polypeptide reads, in one-letter code: Nucleoside diphosphate kinase (143 aa).

ATP is bound by residues lysine 11, phenylalanine 59, arginine 87, threonine 93, arginine 104, and asparagine 114. The active-site Pros-phosphohistidine intermediate is histidine 117.

This sequence belongs to the NDK family. As to quaternary structure, homotetramer. The cofactor is Mg(2+).

The protein resides in the cytoplasm. The catalysed reaction is a 2'-deoxyribonucleoside 5'-diphosphate + ATP = a 2'-deoxyribonucleoside 5'-triphosphate + ADP. It carries out the reaction a ribonucleoside 5'-diphosphate + ATP = a ribonucleoside 5'-triphosphate + ADP. Functionally, major role in the synthesis of nucleoside triphosphates other than ATP. The ATP gamma phosphate is transferred to the NDP beta phosphate via a ping-pong mechanism, using a phosphorylated active-site intermediate. This chain is Nucleoside diphosphate kinase, found in Enterobacter sp. (strain 638).